A 78-amino-acid polypeptide reads, in one-letter code: Translation initiation factor IF-1 (78 aa).

Positions 4–78 (KFNNQAKQDK…LKLGRIIGRK (75 aa)) constitute an S1-like domain.

The protein belongs to the IF-1 family. Component of the 30S ribosomal translation pre-initiation complex which assembles on the 30S ribosome in the order IF-2 and IF-3, IF-1 and N-formylmethionyl-tRNA(fMet); mRNA recruitment can occur at any time during PIC assembly.

The protein localises to the cytoplasm. One of the essential components for the initiation of protein synthesis. Stabilizes the binding of IF-2 and IF-3 on the 30S subunit to which N-formylmethionyl-tRNA(fMet) subsequently binds. Helps modulate mRNA selection, yielding the 30S pre-initiation complex (PIC). Upon addition of the 50S ribosomal subunit IF-1, IF-2 and IF-3 are released leaving the mature 70S translation initiation complex. The polypeptide is Translation initiation factor IF-1 (Mycoplasma pneumoniae (strain ATCC 29342 / M129 / Subtype 1) (Mycoplasmoides pneumoniae)).